Reading from the N-terminus, the 419-residue chain is Pyrophosphate--fructose 6-phosphate 1-phosphotransferase (419 aa).

Gly-12 provides a ligand contact to diphosphate. A Mg(2+)-binding site is contributed by Asp-107. Residues 132–134 (TID), 178–180 (MGR), Glu-238, and 300–303 (YELR) contribute to the substrate site. The Proton acceptor role is filled by Asp-134.

It belongs to the phosphofructokinase type A (PFKA) family. PPi-dependent PFK group II subfamily. Clade 'Short' sub-subfamily. Homodimer. It depends on Mg(2+) as a cofactor. Requires Co(2+) as cofactor. The cofactor is Mn(2+). Ni(2+) serves as cofactor.

It is found in the cytoplasm. The catalysed reaction is beta-D-fructose 6-phosphate + diphosphate = beta-D-fructose 1,6-bisphosphate + phosphate + H(+). Its pathway is carbohydrate degradation; glycolysis; D-glyceraldehyde 3-phosphate and glycerone phosphate from D-glucose: step 3/4. Its activity is regulated as follows. Non-allosteric. In terms of biological role, catalyzes the phosphorylation of D-fructose 6-phosphate, the first committing step of glycolysis. Uses inorganic phosphate (PPi) as phosphoryl donor instead of ATP like common ATP-dependent phosphofructokinases (ATP-PFKs), which renders the reaction reversible, and can thus function both in glycolysis and gluconeogenesis. Consistently, PPi-PFK can replace the enzymes of both the forward (ATP-PFK) and reverse (fructose-bisphosphatase (FBPase)) reactions. The sequence is that of Pyrophosphate--fructose 6-phosphate 1-phosphotransferase from Thermotoga maritima (strain ATCC 43589 / DSM 3109 / JCM 10099 / NBRC 100826 / MSB8).